The sequence spans 234 residues: Large ribosomal subunit protein uL1 (234 aa).

Belongs to the universal ribosomal protein uL1 family. In terms of assembly, part of the 50S ribosomal subunit.

Its function is as follows. Binds directly to 23S rRNA. The L1 stalk is quite mobile in the ribosome, and is involved in E site tRNA release. Protein L1 is also a translational repressor protein, it controls the translation of the L11 operon by binding to its mRNA. The chain is Large ribosomal subunit protein uL1 from Corynebacterium aurimucosum (strain ATCC 700975 / DSM 44827 / CIP 107346 / CN-1) (Corynebacterium nigricans).